The primary structure comprises 229 residues: MGKKYIESSKLIDKSALYNSTEALDLTVKTAKANFDETIELHVRLGVDPRHADQQVRGAVVLPNGTGKTVRVLVFAKGDKATEAQEAGADFVGAEDLVQKIQSENWFDYDVVVATPDMMGVVGRIGRVLGPKGLMPNPKSGTVTFDVAKAIAEIKAGKVEYRVDKTSIVHCPIGKKSFGTEKLKENFTTLMEALVKAKPAAAKGQYLKSITVSSTMGPGAKINPTKALD.

It belongs to the universal ribosomal protein uL1 family. As to quaternary structure, part of the 50S ribosomal subunit.

Its function is as follows. Binds directly to 23S rRNA. The L1 stalk is quite mobile in the ribosome, and is involved in E site tRNA release. Functionally, protein L1 is also a translational repressor protein, it controls the translation of the L11 operon by binding to its mRNA. This Clostridium botulinum (strain Alaska E43 / Type E3) protein is Large ribosomal subunit protein uL1.